A 309-amino-acid chain; its full sequence is HPr kinase/phosphorylase (309 aa).

Catalysis depends on residues His-138 and Lys-159. 153–160 is an ATP binding site; the sequence is GDSGIGKS. Ser-160 contacts Mg(2+). The active-site Proton acceptor; for phosphorylation activity. Proton donor; for dephosphorylation activity is Asp-177. The important for the catalytic mechanism of both phosphorylation and dephosphorylation stretch occupies residues 201 to 210; that stretch reads LEIRGVGIID. Glu-202 provides a ligand contact to Mg(2+). Arg-243 is an active-site residue. Residues 264-269 form an important for the catalytic mechanism of dephosphorylation region; that stretch reads PVKTGR.

The protein belongs to the HPrK/P family. In terms of assembly, homohexamer. Requires Mg(2+) as cofactor.

It carries out the reaction [HPr protein]-L-serine + ATP = [HPr protein]-O-phospho-L-serine + ADP + H(+). It catalyses the reaction [HPr protein]-O-phospho-L-serine + phosphate + H(+) = [HPr protein]-L-serine + diphosphate. In terms of biological role, catalyzes the ATP- as well as the pyrophosphate-dependent phosphorylation of a specific serine residue in HPr, a phosphocarrier protein of the phosphoenolpyruvate-dependent sugar phosphotransferase system (PTS). HprK/P also catalyzes the pyrophosphate-producing, inorganic phosphate-dependent dephosphorylation (phosphorolysis) of seryl-phosphorylated HPr (P-Ser-HPr). The two antagonistic activities of HprK/P are regulated by several intracellular metabolites, which change their concentration in response to the absence or presence of rapidly metabolisable carbon sources (glucose, fructose, etc.) in the growth medium. Therefore, by controlling the phosphorylation state of HPr, HPrK/P is a sensor enzyme that plays a major role in the regulation of carbon metabolism and sugar transport: it mediates carbon catabolite repression (CCR), and regulates PTS-catalyzed carbohydrate uptake and inducer exclusion. In Streptococcus thermophilus (strain ATCC BAA-491 / LMD-9), this protein is HPr kinase/phosphorylase.